The following is a 116-amino-acid chain: Galanin-like peptide (116 aa).

The signal sequence occupies residues 1–24 (MAPPSVPLVLLLVLLLSLAETPAS). A propeptide spanning residues 87–116 (NVMETFAKPEIGDLGMLSMKIPKEEDVLKS) is cleaved from the precursor.

The protein belongs to the galanin family. In terms of tissue distribution, isoform 2 is found in ganglia of ganglioneuroma and ganglioneuroblastoma, as well as in differentiated tumor cells of neuroblastoma tissues. Not found in undifferentiated neuroblasts. Isoform 2 is found in the skin, in pericytes covering microvascular arterioles and venules on their abluminal surfaces. In larger vessels, isoform 2 is expressed in layers of smooth muscle cells. Isoform 2 is not detected in endothelial cells.

It is found in the secreted. Hypothalamic neuropeptide which binds to the G-protein-coupled galanin receptors (GALR1, GALR2 and GALR3). Involved in a large number of putative physiological functions in CNS homeostatic processes, including the regulation of gonadotropin-releasing hormone secretion. Its function is as follows. Exhibits potent and dose-dependent vasoconstrictor and anti-edema activity in the cutaneous microvasculature, a physiologic effects which does not appear to be mediated via GALR1 or GALR2. Exhibits antimicrobial activity against Gram-negative bacterias, inducing bacterial membrane blebbing. The sequence is that of Galanin-like peptide (GALP) from Homo sapiens (Human).